The sequence spans 410 residues: Lissencephaly-1 homolog A (410 aa).

A LisH domain is found at 7 to 39; it reads QRDELNRAIADYLRSNGYEEAYSVFKKEAELDM. Residues 56–83 are a coiled coil; the sequence is TSVIRLQKKVMELESKLNEAKEEINIGG. 7 WD repeats span residues 106 to 145, 148 to 187, 190 to 229, 232 to 271, 274 to 333, 336 to 375, and 378 to 410; these read GHRS…FERT, GHTD…CIRT, GHDH…CVKT, GHRE…CKAE, EHEH…CLMT, GHDN…CTKT, and AHEH…WECR.

It belongs to the WD repeat LIS1/nudF family. In terms of assembly, can self-associate. Component of the cytosolic PAF-AH (I) heterotetrameric enzyme, which is composed of PAFAH1B1 (beta), PAFAH1B2 (alpha2) and PAFAH1B3 (alpha1) subunits. The catalytic activity of the enzyme resides in the alpha1 (PAFAH1B3) and alpha2 (PAFAH1B2) subunits, whereas the beta subunit (PAFAH1B1) has regulatory activity. Trimer formation is not essential for the catalytic activity. Interacts with dynein, dynactin, nde1 and ndel1.

Its subcellular location is the cytoplasm. It localises to the cytoskeleton. The protein localises to the microtubule organizing center. It is found in the centrosome. Its function is as follows. Regulatory subunit (beta subunit) of the cytosolic type I platelet-activating factor (PAF) acetylhydrolase (PAF-AH (I)), an enzyme that catalyzes the hydrolyze of the acetyl group at the sn-2 position of PAF and its analogs and participates in PAF inactivation. Regulates the PAF-AH (I) activity in a catalytic dimer composition-dependent manner. Positively regulates the activity of the minus-end directed microtubule motor protein dynein. May enhance dynein-mediated microtubule sliding by targeting dynein to the microtubule plus end. Required for several dynein- and microtubule-dependent processes such as the maintenance of Golgi integrity, the peripheral transport of microtubule fragments and the coupling of the nucleus and centrosome. May be required for proliferation of neuronal precursors and neuronal migration. The sequence is that of Lissencephaly-1 homolog A (pafah1b1a) from Danio rerio (Zebrafish).